The sequence spans 369 residues: Phenylalanine--tRNA ligase alpha subunit (369 aa).

Residue E272 coordinates Mg(2+).

The protein belongs to the class-II aminoacyl-tRNA synthetase family. Phe-tRNA synthetase alpha subunit type 1 subfamily. As to quaternary structure, tetramer of two alpha and two beta subunits. The cofactor is Mg(2+).

The protein resides in the cytoplasm. It catalyses the reaction tRNA(Phe) + L-phenylalanine + ATP = L-phenylalanyl-tRNA(Phe) + AMP + diphosphate + H(+). In Cutibacterium acnes (strain DSM 16379 / KPA171202) (Propionibacterium acnes), this protein is Phenylalanine--tRNA ligase alpha subunit.